A 271-amino-acid chain; its full sequence is 4-hydroxy-tetrahydrodipicolinate reductase (271 aa).

10 to 15 (GAAGRM) contacts NAD(+). NADP(+) is bound at residue arginine 37. NAD(+)-binding positions include 100–102 (GTT) and 124–127 (SGNM). The active-site Proton donor/acceptor is the histidine 157. Histidine 158 is a binding site for (S)-2,3,4,5-tetrahydrodipicolinate. The active-site Proton donor is the lysine 161. 167 to 168 (GT) contacts (S)-2,3,4,5-tetrahydrodipicolinate. Residues 183-202 (SLSEHEQRGRDGHTGPRKDG) are disordered. The segment covering 185-202 (SEHEQRGRDGHTGPRKDG) has biased composition (basic and acidic residues).

Belongs to the DapB family.

It is found in the cytoplasm. The catalysed reaction is (S)-2,3,4,5-tetrahydrodipicolinate + NAD(+) + H2O = (2S,4S)-4-hydroxy-2,3,4,5-tetrahydrodipicolinate + NADH + H(+). It carries out the reaction (S)-2,3,4,5-tetrahydrodipicolinate + NADP(+) + H2O = (2S,4S)-4-hydroxy-2,3,4,5-tetrahydrodipicolinate + NADPH + H(+). It functions in the pathway amino-acid biosynthesis; L-lysine biosynthesis via DAP pathway; (S)-tetrahydrodipicolinate from L-aspartate: step 4/4. Functionally, catalyzes the conversion of 4-hydroxy-tetrahydrodipicolinate (HTPA) to tetrahydrodipicolinate. The protein is 4-hydroxy-tetrahydrodipicolinate reductase of Beijerinckia indica subsp. indica (strain ATCC 9039 / DSM 1715 / NCIMB 8712).